A 408-amino-acid polypeptide reads, in one-letter code: Peptidase T (408 aa).

The disordered stretch occupies residues methionine 1–serine 28. Positions arginine 11–serine 28 are enriched in polar residues. Histidine 78 provides a ligand contact to Zn(2+). The active site involves aspartate 80. Position 140 (aspartate 140) interacts with Zn(2+). Glutamate 174 functions as the Proton acceptor in the catalytic mechanism. The Zn(2+) site is built by glutamate 175, aspartate 197, and histidine 379.

The protein belongs to the peptidase M20B family. Zn(2+) serves as cofactor.

It is found in the cytoplasm. The enzyme catalyses Release of the N-terminal residue from a tripeptide.. Its function is as follows. Cleaves the N-terminal amino acid of tripeptides. The chain is Peptidase T from Staphylococcus aureus (strain USA300 / TCH1516).